The following is a 250-amino-acid chain: tRNA (guanine-N(1)-)-methyltransferase (250 aa).

S-adenosyl-L-methionine contacts are provided by residues glycine 115 and 135 to 140 (LGDFVL).

Belongs to the RNA methyltransferase TrmD family. As to quaternary structure, homodimer.

It is found in the cytoplasm. The enzyme catalyses guanosine(37) in tRNA + S-adenosyl-L-methionine = N(1)-methylguanosine(37) in tRNA + S-adenosyl-L-homocysteine + H(+). Specifically methylates guanosine-37 in various tRNAs. This chain is tRNA (guanine-N(1)-)-methyltransferase, found in Legionella pneumophila (strain Lens).